Reading from the N-terminus, the 193-residue chain is ATP-dependent Clp protease proteolytic subunit (193 aa).

Ser98 acts as the Nucleophile in catalysis. His123 is a catalytic residue.

The protein belongs to the peptidase S14 family. As to quaternary structure, fourteen ClpP subunits assemble into 2 heptameric rings which stack back to back to give a disk-like structure with a central cavity, resembling the structure of eukaryotic proteasomes.

It localises to the cytoplasm. It catalyses the reaction Hydrolysis of proteins to small peptides in the presence of ATP and magnesium. alpha-casein is the usual test substrate. In the absence of ATP, only oligopeptides shorter than five residues are hydrolyzed (such as succinyl-Leu-Tyr-|-NHMec, and Leu-Tyr-Leu-|-Tyr-Trp, in which cleavage of the -Tyr-|-Leu- and -Tyr-|-Trp bonds also occurs).. Functionally, cleaves peptides in various proteins in a process that requires ATP hydrolysis. Has a chymotrypsin-like activity. Plays a major role in the degradation of misfolded proteins. The polypeptide is ATP-dependent Clp protease proteolytic subunit (Mannheimia succiniciproducens (strain KCTC 0769BP / MBEL55E)).